Consider the following 549-residue polypeptide: Hydroxylamine reductase (549 aa).

Residues Cys-5, Cys-8, Cys-17, and Cys-23 each contribute to the [4Fe-4S] cluster site. Hybrid [4Fe-2O-2S] cluster-binding residues include His-242, Glu-266, Cys-310, Cys-402, Cys-430, Cys-455, Glu-490, and Lys-492. Cys-402 is modified (cysteine persulfide).

It belongs to the HCP family. It depends on [4Fe-4S] cluster as a cofactor. Hybrid [4Fe-2O-2S] cluster serves as cofactor.

The protein resides in the cytoplasm. The catalysed reaction is A + NH4(+) + H2O = hydroxylamine + AH2 + H(+). Catalyzes the reduction of hydroxylamine to form NH(3) and H(2)O. This chain is Hydroxylamine reductase, found in Clostridium novyi (strain NT).